The sequence spans 223 residues: Voltage-dependent calcium channel gamma-1 subunit (223 aa).

Residues 1–10 are Cytoplasmic-facing; sequence MSQTKTAKVR. Residues 11–29 traverse the membrane as a helical segment; the sequence is VTLFFILAGGVLAMVAVVT. At 30-109 the chain is on the extracellular side; the sequence is DHWAVLSPHL…TQKEYSISAA (80 aa). Residues Asn-43 and Asn-80 are each glycosylated (N-linked (GlcNAc...) asparagine). A disulfide bond links Cys-57 and Cys-81. A helical membrane pass occupies residues 110-130; the sequence is AIAIFSLGFIIIGSICAFLSF. Topologically, residues 131–135 are cytoplasmic; it reads GNKRD. Residues 136 to 156 traverse the membrane as a helical segment; sequence YLLRPASMFYAFAGLCLIVSV. At 157-180 the chain is on the extracellular side; it reads EVMRQSVKRMIDSEDTVWIEYYYS. The helical transmembrane segment at 181-205 threads the bilayer; the sequence is WSFACACAGFTLLFLGGLFLLLFSL. At 206–223 the chain is on the cytoplasmic side; that stretch reads PRMPQNPWESCMDTESEH.

The protein belongs to the PMP-22/EMP/MP20 family. CACNG subfamily. Component of a calcium channel complex consisting of a pore-forming alpha subunit (CACNA1S) and the ancillary subunits CACNB1 or CACNB2, CACNG1 and CACNA2D1. The channel complex contains alpha, beta, gamma and delta subunits in a 1:1:1:1 ratio, i.e. it contains either CACNB1 or CACNB2. In terms of processing, N-glycosylated. Skeletal muscle.

The protein resides in the cell membrane. The protein localises to the sarcolemma. In terms of biological role, regulatory subunit of the voltage-gated calcium channel that gives rise to L-type calcium currents in skeletal muscle. Regulates channel inactivation kinetics. This Rattus norvegicus (Rat) protein is Voltage-dependent calcium channel gamma-1 subunit (Cacng1).